The following is a 244-amino-acid chain: NAD-dependent protein deacetylase (244 aa).

Residues 1-244 (MDDKINKLKE…IGKVLGKVID (244 aa)) form the Deacetylase sirtuin-type domain. NAD(+)-binding residues include Ala24, Thr28, Phe35, Arg36, Gln105, Ile107, Asp108, and His123. Phe35 is a nicotinamide binding site. The nicotinamide site is built by Ile107 and Asp108. His123 acts as the Proton acceptor in catalysis. The Zn(2+) site is built by Cys131, Cys134, Cys152, and Cys155. The NAD(+) site is built by Thr193, Ser194, Asn217, and Ile235.

The protein belongs to the sirtuin family. Class U subfamily. Requires Zn(2+) as cofactor.

Its subcellular location is the cytoplasm. The enzyme catalyses N(6)-acetyl-L-lysyl-[protein] + NAD(+) + H2O = 2''-O-acetyl-ADP-D-ribose + nicotinamide + L-lysyl-[protein]. Its function is as follows. NAD-dependent protein deacetylase which modulates the activities of several enzymes which are inactive in their acetylated form. This is NAD-dependent protein deacetylase from Clostridium perfringens (strain 13 / Type A).